The sequence spans 133 residues: Mitochondrial import inner membrane translocase subunit TIM17-3 (133 aa).

Helical transmembrane passes span 15–35 (IVNA…VYHF), 63–83 (GGTF…LVRI), 90–105 (WNSI…VLSI), and 115–128 (SAVM…VLNP).

This sequence belongs to the Tim17/Tim22/Tim23 family. In terms of assembly, component of the TIM17:23 complex at least composed of TIM23, TIM17 and TIM50. The complex interacts with the TIM44 component of the PAM complex. As to expression, expressed in cotyledons, roots, flowers and leaves.

It is found in the mitochondrion inner membrane. Essential component of the TIM17:23 complex, a complex that mediates the translocation of transit peptide-containing proteins across the mitochondrial inner membrane. Links the inner and outer membranes. This chain is Mitochondrial import inner membrane translocase subunit TIM17-3 (TIM17-3), found in Arabidopsis thaliana (Mouse-ear cress).